Here is a 484-residue protein sequence, read N- to C-terminus: ATP synthase subunit beta (484 aa).

169–176 (GGAGVGKT) serves as a coordination point for ATP.

The protein belongs to the ATPase alpha/beta chains family. As to quaternary structure, F-type ATPases have 2 components, CF(1) - the catalytic core - and CF(0) - the membrane proton channel. CF(1) has five subunits: alpha(3), beta(3), gamma(1), delta(1), epsilon(1). CF(0) has three main subunits: a(1), b(2) and c(9-12). The alpha and beta chains form an alternating ring which encloses part of the gamma chain. CF(1) is attached to CF(0) by a central stalk formed by the gamma and epsilon chains, while a peripheral stalk is formed by the delta and b chains.

It localises to the cell membrane. It carries out the reaction ATP + H2O + 4 H(+)(in) = ADP + phosphate + 5 H(+)(out). Its function is as follows. Produces ATP from ADP in the presence of a proton gradient across the membrane. The catalytic sites are hosted primarily by the beta subunits. The sequence is that of ATP synthase subunit beta from Cutibacterium acnes (strain DSM 16379 / KPA171202) (Propionibacterium acnes).